Reading from the N-terminus, the 569-residue chain is Methionine--tRNA ligase (569 aa).

The 'HIGH' region signature appears at 11-21 (PYINGIKHLGN). 4 residues coordinate Zn(2+): Cys143, Cys146, Cys156, and Cys159. Positions 342 to 346 (KFSTS) match the 'KMSKS' region motif. Thr345 lines the ATP pocket.

The protein belongs to the class-I aminoacyl-tRNA synthetase family. MetG type 1 subfamily. As to quaternary structure, monomer. The cofactor is Zn(2+).

Its subcellular location is the cytoplasm. It carries out the reaction tRNA(Met) + L-methionine + ATP = L-methionyl-tRNA(Met) + AMP + diphosphate. Is required not only for elongation of protein synthesis but also for the initiation of all mRNA translation through initiator tRNA(fMet) aminoacylation. The chain is Methionine--tRNA ligase from Caulobacter vibrioides (strain ATCC 19089 / CIP 103742 / CB 15) (Caulobacter crescentus).